The sequence spans 336 residues: Histidinol-phosphate aminotransferase (336 aa).

K204 carries the N6-(pyridoxal phosphate)lysine modification.

It belongs to the class-II pyridoxal-phosphate-dependent aminotransferase family. Histidinol-phosphate aminotransferase subfamily. Requires pyridoxal 5'-phosphate as cofactor.

The enzyme catalyses L-histidinol phosphate + 2-oxoglutarate = 3-(imidazol-4-yl)-2-oxopropyl phosphate + L-glutamate. It functions in the pathway amino-acid biosynthesis; L-histidine biosynthesis; L-histidine from 5-phospho-alpha-D-ribose 1-diphosphate: step 7/9. This Thermococcus kodakarensis (strain ATCC BAA-918 / JCM 12380 / KOD1) (Pyrococcus kodakaraensis (strain KOD1)) protein is Histidinol-phosphate aminotransferase.